The sequence spans 503 residues: Protein phosphatase eya-1 (503 aa).

The Nucleophile role is filled by aspartate 237. The Mg(2+) site is built by aspartate 237 and aspartate 239. Catalysis depends on aspartate 239, which acts as the Proton donor.

The protein belongs to the HAD-like hydrolase superfamily. EYA family. Interacts (via C-terminus) with ceh-34 (via N-terminus). Mg(2+) serves as cofactor. Expressed in body wall muscles. Expressed in BAG sensory neurons and in other head neurons.

It is found in the nucleus. The catalysed reaction is O-phospho-L-tyrosyl-[protein] + H2O = L-tyrosyl-[protein] + phosphate. Functionally, tyrosine protein phosphatase. Acts probably as a transcription regulator in the embryonic and postembryonic development of several tissues including pharynx, vulva and gonads. Required for the development of anterior tissues during late embryogenesis. Together with ceh-34, required to specify the coelomocyte fate in embryonic and postembryonic precursors. In the anterior part of the embryo, prevents apoptosis in cells that are not fated to die. Together with ceh-34 activates proapoptotic factor egl-1 expression to promote motor neuron M4 sister cell apoptosis. Also promotes apoptosis of I1 pharyngeal neuron sister cell. Plays a role in locomotion and fertility. May play a role in resistance to heat and oxidative stresses. May cooperate with the transcription factors vab-3 and ceh-32 to repress transcription factor ets-5 expression in non BAG neuronal cells. In Caenorhabditis elegans, this protein is Protein phosphatase eya-1.